A 234-amino-acid chain; its full sequence is MSVHIGAKEHEIADKILLPGDPLRAKYIAETFLEGATCYNQVRGMLGFTGTYKGHRISVQGTGMGVPSISIYITELMQSYNVQTLIRVGTCGAIQKDVKVRDVILAMTSSTDSQMNRMTFGGIDYAPTANFDLLKTAYEIGKEKGLQLKVGSVFTADMFYNENAQFEKLARYGVLAVEMETTALYTLAAKFGRKALSVLTVSDHILTGEETTAEERQTTFNEMIEVALETAIRQ.

A purine D-ribonucleoside is bound at residue histidine 4. Phosphate-binding positions include glycine 20, arginine 24, arginine 43, and 87-90 (RVGT). A purine D-ribonucleoside-binding positions include glutamate 162, 178-180 (EME), and 202-203 (SD). Aspartate 203 functions as the Proton donor in the catalytic mechanism.

Belongs to the PNP/UDP phosphorylase family. In terms of assembly, homohexamer; trimer of homodimers.

The enzyme catalyses a purine D-ribonucleoside + phosphate = a purine nucleobase + alpha-D-ribose 1-phosphate. The catalysed reaction is a purine 2'-deoxy-D-ribonucleoside + phosphate = a purine nucleobase + 2-deoxy-alpha-D-ribose 1-phosphate. In terms of biological role, catalyzes the reversible phosphorolytic breakdown of the N-glycosidic bond in the beta-(deoxy)ribonucleoside molecules, with the formation of the corresponding free purine bases and pentose-1-phosphate. Its function is as follows. Cleavage of adenosine and its derivatives. In Geobacillus stearothermophilus (Bacillus stearothermophilus), this protein is Purine nucleoside phosphorylase DeoD-type.